The chain runs to 284 residues: 4-diphosphocytidyl-2-C-methyl-D-erythritol kinase (284 aa).

The active site involves lysine 22. Residue 104-114 (PVGAGLGGASS) participates in ATP binding. Aspartate 146 is an active-site residue.

It belongs to the GHMP kinase family. IspE subfamily.

It catalyses the reaction 4-CDP-2-C-methyl-D-erythritol + ATP = 4-CDP-2-C-methyl-D-erythritol 2-phosphate + ADP + H(+). It functions in the pathway isoprenoid biosynthesis; isopentenyl diphosphate biosynthesis via DXP pathway; isopentenyl diphosphate from 1-deoxy-D-xylulose 5-phosphate: step 3/6. In terms of biological role, catalyzes the phosphorylation of the position 2 hydroxy group of 4-diphosphocytidyl-2C-methyl-D-erythritol. The protein is 4-diphosphocytidyl-2-C-methyl-D-erythritol kinase of Hydrogenobaculum sp. (strain Y04AAS1).